Here is a 190-residue protein sequence, read N- to C-terminus: Early nodulin-like protein 12 (190 aa).

Positions 1–21 are cleaved as a signal peptide; that stretch reads MGIIVPVLTLVFLLFAKVSHG. Residues 26-130 form the Phytocyanin domain; it reads RVILVGGSVG…GEKITLVVLA (105 aa). N-linked (GlcNAc...) asparagine glycosylation is present at Asn44. A disulfide bridge connects residues Cys84 and Cys118. A disordered region spans residues 135–164; it reads GGGSSSGDAPKVSPVSPTAQTPAPAPGPAA. Residues 151–164 are compositionally biased toward low complexity; sequence PTAQTPAPAPGPAA. Asn167 carries the GPI-anchor amidated asparagine lipid modification. Residues 168-190 constitute a propeptide, removed in mature form; that stretch reads AAVGLKVASGWFLTAVVVGLAMA.

The protein belongs to the early nodulin-like (ENODL) family. In terms of tissue distribution, confined to flowers and siliques. Expressed in female gametophytes.

The protein localises to the cell membrane. May act as a carbohydrate transporter. Required, together with ENODL11, ENODL12, ENODL13, ENODL14 and ENODL15, for male-female communication and pollen tube reception and burst at the synergid cell surface of the female gametophyte. This is Early nodulin-like protein 12 from Arabidopsis thaliana (Mouse-ear cress).